We begin with the raw amino-acid sequence, 699 residues long: Elongation factor G (699 aa).

The tr-type G domain occupies 8 to 283; it reads EHIRNIGICA…AVVDFLPSPI (276 aa). GTP contacts are provided by residues 17-24, 81-85, and 135-138; these read AHIDAGKT, DTPGH, and NKMD.

It belongs to the TRAFAC class translation factor GTPase superfamily. Classic translation factor GTPase family. EF-G/EF-2 subfamily.

The protein resides in the cytoplasm. In terms of biological role, catalyzes the GTP-dependent ribosomal translocation step during translation elongation. During this step, the ribosome changes from the pre-translocational (PRE) to the post-translocational (POST) state as the newly formed A-site-bound peptidyl-tRNA and P-site-bound deacylated tRNA move to the P and E sites, respectively. Catalyzes the coordinated movement of the two tRNA molecules, the mRNA and conformational changes in the ribosome. This chain is Elongation factor G, found in Rickettsia rickettsii (strain Iowa).